Here is a 431-residue protein sequence, read N- to C-terminus: 23S rRNA (uracil(1939)-C(5))-methyltransferase RlmD (431 aa).

A TRAM domain is found at 8–68 (KRRVTTRQII…SKYSRGQVKR (61 aa)). Residues cysteine 81, cysteine 87, cysteine 90, and cysteine 162 each coordinate [4Fe-4S] cluster. 6 residues coordinate S-adenosyl-L-methionine: glutamine 265, phenylalanine 294, asparagine 299, glutamate 315, asparagine 342, and aspartate 363. Catalysis depends on cysteine 389, which acts as the Nucleophile.

Belongs to the class I-like SAM-binding methyltransferase superfamily. RNA M5U methyltransferase family. RlmD subfamily.

The enzyme catalyses uridine(1939) in 23S rRNA + S-adenosyl-L-methionine = 5-methyluridine(1939) in 23S rRNA + S-adenosyl-L-homocysteine + H(+). Functionally, catalyzes the formation of 5-methyl-uridine at position 1939 (m5U1939) in 23S rRNA. The chain is 23S rRNA (uracil(1939)-C(5))-methyltransferase RlmD from Enterobacter sp. (strain 638).